A 347-amino-acid chain; its full sequence is Phenylalanine--tRNA ligase alpha subunit (347 aa).

Glu-265 contributes to the Mg(2+) binding site.

The protein belongs to the class-II aminoacyl-tRNA synthetase family. Phe-tRNA synthetase alpha subunit type 1 subfamily. In terms of assembly, tetramer of two alpha and two beta subunits. It depends on Mg(2+) as a cofactor.

Its subcellular location is the cytoplasm. The catalysed reaction is tRNA(Phe) + L-phenylalanine + ATP = L-phenylalanyl-tRNA(Phe) + AMP + diphosphate + H(+). The sequence is that of Phenylalanine--tRNA ligase alpha subunit from Mycolicibacterium vanbaalenii (strain DSM 7251 / JCM 13017 / BCRC 16820 / KCTC 9966 / NRRL B-24157 / PYR-1) (Mycobacterium vanbaalenii).